Reading from the N-terminus, the 205-residue chain is High frequency lysogenization protein HflD homolog (205 aa).

This sequence belongs to the HflD family.

It localises to the cytoplasm. It is found in the cell inner membrane. This chain is High frequency lysogenization protein HflD homolog, found in Shewanella baltica (strain OS185).